Here is a 463-residue protein sequence, read N- to C-terminus: T-box transcription factor TBX1-B (463 aa).

Disordered regions lie at residues 39 to 58 and 75 to 102; these read SPSP…PCSA and GASS…APVK. Residues 75 to 96 show a composition bias toward low complexity; it reads GASSSSCASSTPGSGSTGSSSG. Positions 119-297 form a DNA-binding region, T-box; that stretch reads LWDEFNQLGT…SNPFAKGFRD (179 aa). 2 disordered regions span residues 320–343 and 367–406; these read RSRN…RREY and SPSL…HHHP. Polar residues predominate over residues 323-332; that stretch reads NPVSSPPQNG. The span at 333–343 shows a compositional bias: basic and acidic residues; the sequence is SDKDGDGRREY. Residues 367–380 show a composition bias toward low complexity; sequence SPSLPVPGGLVPLS. The Nuclear localization signal signature appears at 420–431; that stretch reads KTRPAPYPLPSI.

In terms of assembly, binds DNA as a dimer. Interacts with dscr6/ripply3.

The protein resides in the nucleus. In terms of biological role, probable transcriptional regulator involved in developmental processes. Binds to the palindromic T site 5'-TTCACACCTAGGTGTGAA-3' DNA sequence. Induces pre-placodal ectoderm (PPE) gene expression in regions where RIPPLY3 is absent. Plays a role in the formation of the anteroposterior (AP) axis during embryonic development; required to establish the posterolateral border of the pre-placodal ectoderm (PPE) acting downstream of the retinoic acid receptor (RAR) signaling. Its function is as follows. Probable transcriptional regulator involved in developmental processes. Binds to the palindromic T site 5'-TTCACACCTAGGTGTGAA-3' DNA sequence. Is required for normal development of the pharyngeal arch arteries. The chain is T-box transcription factor TBX1-B (tbx1-b) from Xenopus laevis (African clawed frog).